Consider the following 463-residue polypeptide: MNRGKLPEGWATAPVSTVTTLIRGVTYKKEQALNYLQDDYLPIIRANNIQNGKFDTTDLVFVPKNLVKESQKISPEDIVIAMSSGSKSVVGKSAHQRLPFECSFGAFCGALRPEKFISPNYIAHFTKSSFYRNKISSLSAGANINNIKPASFDLINIPIPSLAEQKIIAEKLDTLLAQVDSTKARLEQIPQILKRFRQAVLAAAVSGTLTTALRNSHSLIGWHSTNLGALIVDSCNGLAKRQGLNGNEITILRLADFKDAQRIIGNERKIKLDSKEENKYSLENDDILVIRVNGSADLAGRFIEYKSNGDIEGFCDHFIRLRLDSNKIMSRFLTYIANEGEGRFYLRNSLSTSAGQNTINQTSIKGLSFLLPPLKEQAEIVRRVEQLFAYADTIEKQVNNALTRVNSLTQSILAKAFRGELTAQWRAENPDLISGKNSAAALLEKIKAERAVSGGKKTSRKKA.

The protein belongs to the type-I restriction system S methylase family. The type I restriction/modification system is composed of three polypeptides R, M and S; the restriction enzyme has stoichiometry R(2)M(2)S(1) while the methyltransferase is M(2)S(1).

In terms of biological role, the specificity (S) subunit of a type I restriction enzyme; this subunit dictates DNA sequence specificity. The M and S subunits together form a methyltransferase (MTase) that methylates A-2 on the top strand and A-3 on the bottom strand of the sequence 5'-AACN(6)GTRC-3'. In the presence of the R subunit the complex can also act as an endonuclease, binding to the same target sequence but cutting the DNA some distance from this site. Whether the DNA is cut or modified depends on the methylation state of the target sequence. When the target site is unmodified, the DNA is cut. When the target site is hemimethylated, the complex acts as a maintenance MTase modifying the DNA so that both strands become methylated. After locating a non-methylated recognition site, the enzyme complex serves as a molecular motor that translocates DNA in an ATP-dependent manner until a collision occurs that triggers cleavage. The protein is Type I restriction enzyme StySPI specificity subunit of Salmonella potsdam.